The chain runs to 270 residues: Formamidopyrimidine-DNA glycosylase (270 aa).

Catalysis depends on proline 2, which acts as the Schiff-base intermediate with DNA. Glutamate 3 acts as the Proton donor in catalysis. Catalysis depends on lysine 58, which acts as the Proton donor; for beta-elimination activity. Positions 91, 110, and 151 each coordinate DNA. An FPG-type zinc finger spans residues 236–270; it reads FVYGRGGEFCKVCGSTLREIRLGQRASVYCPRCQR. Arginine 260 acts as the Proton donor; for delta-elimination activity in catalysis.

This sequence belongs to the FPG family. In terms of assembly, monomer. Zn(2+) is required as a cofactor.

It catalyses the reaction Hydrolysis of DNA containing ring-opened 7-methylguanine residues, releasing 2,6-diamino-4-hydroxy-5-(N-methyl)formamidopyrimidine.. The catalysed reaction is 2'-deoxyribonucleotide-(2'-deoxyribose 5'-phosphate)-2'-deoxyribonucleotide-DNA = a 3'-end 2'-deoxyribonucleotide-(2,3-dehydro-2,3-deoxyribose 5'-phosphate)-DNA + a 5'-end 5'-phospho-2'-deoxyribonucleoside-DNA + H(+). Its function is as follows. Involved in base excision repair of DNA damaged by oxidation or by mutagenic agents. Acts as a DNA glycosylase that recognizes and removes damaged bases. Has a preference for oxidized purines, such as 7,8-dihydro-8-oxoguanine (8-oxoG). Has AP (apurinic/apyrimidinic) lyase activity and introduces nicks in the DNA strand. Cleaves the DNA backbone by beta-delta elimination to generate a single-strand break at the site of the removed base with both 3'- and 5'-phosphates. The sequence is that of Formamidopyrimidine-DNA glycosylase from Pseudomonas aeruginosa (strain LESB58).